We begin with the raw amino-acid sequence, 472 residues long: Adenosylhomocysteinase (472 aa).

Substrate is bound by residues Thr-62, Asp-137, and Glu-197. An NAD(+)-binding site is contributed by 198–200 (TTT). Residues Lys-227 and Asp-231 each coordinate substrate. NAD(+) contacts are provided by residues Asn-232, 261–266 (GYGDVG), Glu-284, Asn-319, 340–342 (IGH), and Asn-385.

Belongs to the adenosylhomocysteinase family. Requires NAD(+) as cofactor.

It is found in the cytoplasm. It catalyses the reaction S-adenosyl-L-homocysteine + H2O = L-homocysteine + adenosine. It participates in amino-acid biosynthesis; L-homocysteine biosynthesis; L-homocysteine from S-adenosyl-L-homocysteine: step 1/1. Functionally, may play a key role in the regulation of the intracellular concentration of adenosylhomocysteine. This Bordetella pertussis (strain Tohama I / ATCC BAA-589 / NCTC 13251) protein is Adenosylhomocysteinase.